We begin with the raw amino-acid sequence, 78 residues long: Short neurotoxin OH-5 (78 aa).

An N-terminal signal peptide occupies residues 1–21 (MKNLLLTFLVVTIVCLDLGYT). Disulfide bonds link C24/C40, C33/C58, C62/C70, and C71/C76.

This sequence belongs to the three-finger toxin family. Short-chain subfamily. As to expression, expressed by the venom gland.

It is found in the secreted. Functionally, this three-finger toxin binds and inhibits the nicotinic acetylcholine receptor (nAChR). This Ophiophagus hannah (King cobra) protein is Short neurotoxin OH-5.